Here is a 478-residue protein sequence, read N- to C-terminus: Putative L-amino-acid oxidase YobN (478 aa).

FAD is bound by residues Ser34, Glu53, Arg61, and 80 to 81 (MR). 2 residues coordinate substrate: Arg81 and Tyr369. FAD-binding positions include Glu451 and 460 to 463 (MQGA).

This sequence belongs to the flavin monoamine oxidase family. FIG1 subfamily. FAD is required as a cofactor.

It catalyses the reaction an L-alpha-amino acid + O2 + H2O = a 2-oxocarboxylate + H2O2 + NH4(+). This chain is Putative L-amino-acid oxidase YobN (yobN), found in Bacillus subtilis (strain 168).